The following is a 110-amino-acid chain: V-type proton ATPase subunit F (110 aa).

This sequence belongs to the V-ATPase F subunit family. As to quaternary structure, V-ATPase is a heteromultimeric enzyme made up of two complexes: the ATP-hydrolytic V1 complex and the proton translocation V0 complex. The V1 complex consists of three catalytic AB heterodimers that form a heterohexamer, three peripheral stalks each consisting of EG heterodimers, one central rotor including subunits D and F, and the regulatory subunits C and H. The proton translocation complex V0 consists of the proton transport subunit a, a ring of proteolipid subunits c9c'', rotary subunit d, subunits e and f, and two accessory subunits.

Its function is as follows. Subunit of the V1 complex of vacuolar(H+)-ATPase (V-ATPase), a multisubunit enzyme composed of a peripheral complex (V1) that hydrolyzes ATP and a membrane integral complex (V0) that translocates protons. V-ATPase is responsible for acidifying and maintaining the pH of intracellular compartments and in some cell types, is targeted to the plasma membrane, where it is responsible for acidifying the extracellular environment. The polypeptide is V-type proton ATPase subunit F (atp6s14) (Xenopus laevis (African clawed frog)).